Reading from the N-terminus, the 481-residue chain is Glutamate--tRNA ligase (481 aa).

Residues 28-38 carry the 'HIGH' region motif; the sequence is PSPTGFLHLGG. Residues 139-148 are compositionally biased toward basic and acidic residues; it reads RYDGTWRPEP. The disordered stretch occupies residues 139 to 159; sequence RYDGTWRPEPGKTLPPVPADR. A 'KMSKS' region motif is present at residues 260 to 264; sequence KLSKR. Lys263 contributes to the ATP binding site.

This sequence belongs to the class-I aminoacyl-tRNA synthetase family. Glutamate--tRNA ligase type 1 subfamily. Monomer.

The protein resides in the cytoplasm. It catalyses the reaction tRNA(Glu) + L-glutamate + ATP = L-glutamyl-tRNA(Glu) + AMP + diphosphate. Its function is as follows. Catalyzes the attachment of glutamate to tRNA(Glu) in a two-step reaction: glutamate is first activated by ATP to form Glu-AMP and then transferred to the acceptor end of tRNA(Glu). In Bordetella bronchiseptica (strain ATCC BAA-588 / NCTC 13252 / RB50) (Alcaligenes bronchisepticus), this protein is Glutamate--tRNA ligase.